The sequence spans 119 residues: NADH-quinone oxidoreductase subunit A (119 aa).

3 helical membrane passes run Phe-7 to Gly-27, Leu-63 to Val-83, and Ile-88 to Val-108.

The protein belongs to the complex I subunit 3 family. As to quaternary structure, NDH-1 is composed of 14 different subunits. Subunits NuoA, H, J, K, L, M, N constitute the membrane sector of the complex.

The protein resides in the cell inner membrane. The enzyme catalyses a quinone + NADH + 5 H(+)(in) = a quinol + NAD(+) + 4 H(+)(out). Functionally, NDH-1 shuttles electrons from NADH, via FMN and iron-sulfur (Fe-S) centers, to quinones in the respiratory chain. The immediate electron acceptor for the enzyme in this species is believed to be ubiquinone. Couples the redox reaction to proton translocation (for every two electrons transferred, four hydrogen ions are translocated across the cytoplasmic membrane), and thus conserves the redox energy in a proton gradient. The chain is NADH-quinone oxidoreductase subunit A from Ralstonia pickettii (strain 12J).